Reading from the N-terminus, the 165-residue chain is MGLNLNDKKAVVAEVSAQVANAQTIVIAEYRGIEVTDLTVLRKKARESGVYLRVLKNTLVRRAVADTAFAALADHMVGPLIYSVSADPVAAAKVLSDFAKSNDKLVLKAGSYAGKVLDKAGVQALASVPSREELLSKLLYVMQAPVAGFVRGLAALAAQREEAAA.

This sequence belongs to the universal ribosomal protein uL10 family. As to quaternary structure, part of the ribosomal stalk of the 50S ribosomal subunit. The N-terminus interacts with L11 and the large rRNA to form the base of the stalk. The C-terminus forms an elongated spine to which L12 dimers bind in a sequential fashion forming a multimeric L10(L12)X complex.

In terms of biological role, forms part of the ribosomal stalk, playing a central role in the interaction of the ribosome with GTP-bound translation factors. The polypeptide is Large ribosomal subunit protein uL10 (Dechloromonas aromatica (strain RCB)).